The chain runs to 314 residues: Type II methyltransferase M.HpaI (314 aa).

Belongs to the N(4)/N(6)-methyltransferase family.

It catalyses the reaction a 2'-deoxyadenosine in DNA + S-adenosyl-L-methionine = an N(6)-methyl-2'-deoxyadenosine in DNA + S-adenosyl-L-homocysteine + H(+). In terms of biological role, a beta subtype methylase that recognizes the double-stranded sequence 5'-GTTAAC-3', methylates A-5 on both strands, and protects the DNA from cleavage by the HpaI endonuclease. The sequence is that of Type II methyltransferase M.HpaI (hpaIM) from Haemophilus parainfluenzae.